A 416-amino-acid polypeptide reads, in one-letter code: Serine/threonine-protein kinase 26 (416 aa).

The residue at position 2 (A2) is an N-acetylalanine. S4 bears the Phosphoserine mark. One can recognise a Protein kinase domain in the interval 24–274; that stretch reads FTKLERIGKG…AKELLKHKFI (251 aa). ATP-binding positions include 30 to 38 and K53; that span reads IGKGSFGEV. D144 acts as the Proton acceptor in catalysis. T178 carries the post-translational modification Phosphothreonine; by autocatalysis. The interval 297-340 is disordered; that stretch reads EGHSDDESDSEGSDSESTSRENNTHPEWSFTTVRKKPDPKKVQN. A phosphoserine mark is found at S300, S304, S306, S309, and S325. A phosphothreonine mark is found at T327 and T328.

This sequence belongs to the protein kinase superfamily. STE Ser/Thr protein kinase family. STE20 subfamily. In terms of assembly, homodimer. Interacts with PDCD10. Interacts with GOLGA2. Interacts with CTTNBP2NL. Interacts with RIPOR1 (via C-terminus); this interaction occurs in a PDCD10-dependent and Rho-independent manner. Interacts with PDCD10; this interaction is required for the association of STK26 with RIPOR1. Part of the core of STRIPAK complexes composed of PP2A catalytic and scaffolding subunits, the striatins (PP2A regulatory subunits), the striatin-associated proteins MOB4, STRIP1 and STRIP2, PDCD10 and members of the STE20 kinases, such as STK24 and STK26. Requires Mg(2+) as cofactor.

It localises to the cytoplasm. It is found in the golgi apparatus. It catalyses the reaction L-seryl-[protein] + ATP = O-phospho-L-seryl-[protein] + ADP + H(+). The enzyme catalyses L-threonyl-[protein] + ATP = O-phospho-L-threonyl-[protein] + ADP + H(+). Interaction with Golgi matrix protein GOLGA2 leads to autophosphorylation on Thr-178, possibly as a consequence of stabilization of dimer formation. May also be activated by C-terminal cleavage. Functionally, serine/threonine-protein kinase that acts as a mediator of cell growth. Modulates apoptosis. In association with STK24 negatively regulates Golgi reorientation in polarized cell migration upon RHO activation. Phosphorylates ATG4B at 'Ser-383', thereby increasing autophagic flux. Part of the striatin-interacting phosphatase and kinase (STRIPAK) complexes. STRIPAK complexes have critical roles in protein (de)phosphorylation and are regulators of multiple signaling pathways including Hippo, MAPK, nuclear receptor and cytoskeleton remodeling. Different types of STRIPAK complexes are involved in a variety of biological processes such as cell growth, differentiation, apoptosis, metabolism and immune regulation. The sequence is that of Serine/threonine-protein kinase 26 from Homo sapiens (Human).